The primary structure comprises 194 residues: uncharacterized protein (194 aa).

The interval 45-138 is disordered; the sequence is QLLGVPEQHR…AGPPRGDWGV (94 aa). Residues S69 and S76 each carry the phosphoserine modification. Over residues 97–106 the composition is skewed to pro residues; that stretch reads PPLPPPPVLP. Residues 107 to 116 are compositionally biased toward low complexity; the sequence is GPGEELPGAR. Residues 117–128 show a composition bias toward gly residues; sequence LPGGGGDDGAGR.

This is an uncharacterized protein from Homo sapiens (Human).